The sequence spans 40 residues: Photosystem II reaction center protein J (40 aa).

Residues 8 to 28 (IPLWLIGTVAGILIIGLLGVF) form a helical membrane-spanning segment.

The protein belongs to the PsbJ family. As to quaternary structure, PSII is composed of 1 copy each of membrane proteins PsbA, PsbB, PsbC, PsbD, PsbE, PsbF, PsbH, PsbI, PsbJ, PsbK, PsbL, PsbM, PsbT, PsbX, PsbY, PsbZ, Psb30/Ycf12, at least 3 peripheral proteins of the oxygen-evolving complex and a large number of cofactors. It forms dimeric complexes.

It localises to the plastid. Its subcellular location is the chloroplast thylakoid membrane. Its function is as follows. One of the components of the core complex of photosystem II (PSII). PSII is a light-driven water:plastoquinone oxidoreductase that uses light energy to abstract electrons from H(2)O, generating O(2) and a proton gradient subsequently used for ATP formation. It consists of a core antenna complex that captures photons, and an electron transfer chain that converts photonic excitation into a charge separation. In Nandina domestica (Heavenly bamboo), this protein is Photosystem II reaction center protein J.